The following is a 278-amino-acid chain: Bifunctional protein FolD (278 aa).

NADP(+)-binding positions include 165 to 167 (GRS), Ser190, and Thr231.

Belongs to the tetrahydrofolate dehydrogenase/cyclohydrolase family. As to quaternary structure, homodimer.

It carries out the reaction (6R)-5,10-methylene-5,6,7,8-tetrahydrofolate + NADP(+) = (6R)-5,10-methenyltetrahydrofolate + NADPH. The enzyme catalyses (6R)-5,10-methenyltetrahydrofolate + H2O = (6R)-10-formyltetrahydrofolate + H(+). The protein operates within one-carbon metabolism; tetrahydrofolate interconversion. Functionally, catalyzes the oxidation of 5,10-methylenetetrahydrofolate to 5,10-methenyltetrahydrofolate and then the hydrolysis of 5,10-methenyltetrahydrofolate to 10-formyltetrahydrofolate. The sequence is that of Bifunctional protein FolD from Clostridium novyi (strain NT).